The chain runs to 282 residues: HTH-type transcriptional activator RhaR (282 aa).

Residues 179–277 form the HTH araC/xylS-type domain; it reads DKLITALAGS…GMTPVQWRHR (99 aa). 2 DNA-binding regions (H-T-H motif) span residues 196–217 and 244–267; these read EKFCEQEQCSERALRQQFRTQT and VSEVAMRCGFEDSNYFSVVFNREV.

Binds DNA as a dimer.

The protein localises to the cytoplasm. Activates expression of the rhaSR operon in response to L-rhamnose. This is HTH-type transcriptional activator RhaR from Enterobacter sp. (strain 638).